Reading from the N-terminus, the 224-residue chain is Claudin-17 (224 aa).

Topologically, residues methionine 1–glutamine 7 are cytoplasmic. A helical transmembrane segment spans residues isoleucine 8 to proline 28. Over glutamine 29–arginine 81 the chain is Extracellular. The chain crosses the membrane as a helical span at residues alanine 82 to methionine 102. Residues lysine 103 to valine 124 lie on the Cytoplasmic side of the membrane. The chain crosses the membrane as a helical span at residues leucine 125 to isoleucine 145. Over arginine 146 to alanine 164 the chain is Extracellular. Residues leucine 165–phenylalanine 185 form a helical membrane-spanning segment. At cysteine 186–valine 224 the chain is on the cytoplasmic side.

The protein belongs to the claudin family. In terms of assembly, cannot form tight junction strands on its own. Interacts with OCLN. In the kidney, expressed in the proximal tubule and in the Henle's loop. In the distal convoluted tubule, not expressed in all tubules. Not detected in the collecting duct (at protein level).

The protein localises to the cell junction. Its subcellular location is the tight junction. It localises to the basolateral cell membrane. The enzyme catalyses chloride(in) = chloride(out). The catalysed reaction is hydrogencarbonate(in) = hydrogencarbonate(out). It carries out the reaction bromide(in) = bromide(out). It catalyses the reaction iodide(out) = iodide(in). The enzyme catalyses fluoride(in) = fluoride(out). The catalysed reaction is nitrate(in) = nitrate(out). It carries out the reaction thiocyanate(in) = thiocyanate(out). Channel-forming tight junction protein with selectivity for anions, including chloride and hydrogencarbonate, and for solutes smaller than 9 Angstrom in diameter. In the kidney proximal tubule, may be involved in paracellular reabsorption of filtered anions. Does not affect water permeability. The protein is Claudin-17 (CLDN17) of Homo sapiens (Human).